Consider the following 115-residue polypeptide: MGNFRFPIKTKLPPGFINARILRDNFKRQQFKENEILVKSLKFIARNMNLPTKLRLEAQLKLNALPNYMRSTQIKNRCVDSGHARFVLSDFRLCRYQFRENALKGNLPGVKKGIW.

Belongs to the universal ribosomal protein uS14 family. As to quaternary structure, component of the mitochondrial small ribosomal subunit (mt-SSU). Mature yeast 74S mitochondrial ribosomes consist of a small (37S) and a large (54S) subunit. The 37S small subunit contains a 15S ribosomal RNA (15S mt-rRNA) and 34 different proteins. The 54S large subunit contains a 21S rRNA (21S mt-rRNA) and 46 different proteins.

It is found in the mitochondrion. Component of the mitochondrial ribosome (mitoribosome), a dedicated translation machinery responsible for the synthesis of mitochondrial genome-encoded proteins, including at least some of the essential transmembrane subunits of the mitochondrial respiratory chain. The mitoribosomes are attached to the mitochondrial inner membrane and translation products are cotranslationally integrated into the membrane. This is Small ribosomal subunit protein uS14m (MRP2) from Saccharomyces cerevisiae (strain ATCC 204508 / S288c) (Baker's yeast).